The primary structure comprises 481 residues: Aspartyl/glutamyl-tRNA(Asn/Gln) amidotransferase subunit B (481 aa).

This sequence belongs to the GatB/GatE family. GatB subfamily. In terms of assembly, heterotrimer of A, B and C subunits.

It catalyses the reaction L-glutamyl-tRNA(Gln) + L-glutamine + ATP + H2O = L-glutaminyl-tRNA(Gln) + L-glutamate + ADP + phosphate + H(+). The catalysed reaction is L-aspartyl-tRNA(Asn) + L-glutamine + ATP + H2O = L-asparaginyl-tRNA(Asn) + L-glutamate + ADP + phosphate + 2 H(+). Its function is as follows. Allows the formation of correctly charged Asn-tRNA(Asn) or Gln-tRNA(Gln) through the transamidation of misacylated Asp-tRNA(Asn) or Glu-tRNA(Gln) in organisms which lack either or both of asparaginyl-tRNA or glutaminyl-tRNA synthetases. The reaction takes place in the presence of glutamine and ATP through an activated phospho-Asp-tRNA(Asn) or phospho-Glu-tRNA(Gln). The sequence is that of Aspartyl/glutamyl-tRNA(Asn/Gln) amidotransferase subunit B from Pseudomonas fluorescens (strain ATCC BAA-477 / NRRL B-23932 / Pf-5).